Consider the following 238-residue polypeptide: uncharacterized protein (238 aa).

The next 3 helical transmembrane spans lie at 19 to 39 (IVIEAFPGTGLVGSIAGFQII), 79 to 99 (IILFSDIIISPFKINGLAEFI), and 141 to 161 (YVEIFDFGVVGGMGGNLLIKC).

The protein localises to the cell membrane. This is an uncharacterized protein from Methanocaldococcus jannaschii (strain ATCC 43067 / DSM 2661 / JAL-1 / JCM 10045 / NBRC 100440) (Methanococcus jannaschii).